The sequence spans 4965 residues: Auxin transport protein BIG (4965 aa).

3 consecutive transmembrane segments (helical) span residues 289–309, 646–666, and 772–792; these read SDIC…IFSP, ACLA…AYEV, and LFLI…YEGL. The interval 1383–1425 is disordered; that stretch reads TNQESNSTVDCDASSGEEDEDDGTSDGELVSIDRDEEEDGNSE. A compositionally biased stretch (acidic residues) spans 1397–1407; it reads SGEEDEDDGTS. The segment at 1431–1502 adopts a UBR-type zinc-finger fold; that stretch reads KVCTFTSSGS…RGSSCQCLKP (72 aa). Residues 2437–2456 are disordered; the sequence is DDAPDNHAKASAASNSTTGN. The span at 2445–2456 shows a compositional bias: low complexity; it reads KASAASNSTTGN. The ZZ-type zinc finger occupies 2469 to 2528; that stretch reads SVQYCCDGCSTVPILRRRWHCNICPDFDLCETCYEILDADRLPAPHSRDHPMSAIPIELD. Residues Cys-2474, Cys-2477, Cys-2489, Cys-2492, Cys-2498, Cys-2501, His-2514, and His-2518 each coordinate Zn(2+). Residues 2997-3037 are disordered; that stretch reads NAQKTESGDIGSSTRTGSQSSDSKKKRKGDDSSEGSSEKSC. Positions 3007–3017 are enriched in low complexity; it reads GSSTRTGSQSS. The span at 3024–3037 shows a compositional bias: basic and acidic residues; sequence KGDDSSEGSSEKSC. The MYND-type; degenerate zinc-finger motif lies at 3319–3359; that stretch reads CPRCSRSVTDKHGICSNCHENAYQCRQCRNINYENLDSFLC. The disordered stretch occupies residues 3672–3721; sequence PKSDSGEKEPGMGKSSLMQAKNDDTVGHSVTNLSTSKTQSELSGKIPDGS. The segment covering 3699-3713 has biased composition (polar residues); that stretch reads HSVTNLSTSKTQSEL. The segment at 4433–4963 is UBR4 E3 catalytic module; it reads PSIPLILSML…DFVRAIIHGA (531 aa). The HemiRING-type zinc finger occupies 4562–4681; the sequence is GLACMVCREG…WDQLNSLGRA (120 aa). Cys-4565, Cys-4568, His-4615, and Cys-4618 together coordinate Zn(2+). Positions 4684 to 4963 constitute a UZI domain; the sequence is SRLRLLTYDI…DFVRAIIHGA (280 aa). Positions 4753 to 4770 are enriched in low complexity; sequence SSSPSTPESPVRLSALSG. 2 disordered regions span residues 4753 to 4778 and 4822 to 4846; these read SSSP…SGSS and STLK…ADSN. A compositionally biased stretch (polar residues) spans 4824 to 4845; that stretch reads LKLSADTSSSAVRSDEGSSADS.

This sequence belongs to the UBR4 family.

The protein resides in the membrane. Functionally, required for auxin efflux and polar auxin transport (PAT) influencing auxin-mediated developmental responses (e.g. cell elongation, apical dominance, lateral root production, inflorescence architecture, general growth and development). This chain is Auxin transport protein BIG, found in Oryza sativa subsp. japonica (Rice).